The following is a 168-amino-acid chain: 2-C-methyl-D-erythritol 2,4-cyclodiphosphate synthase (168 aa).

A divalent metal cation contacts are provided by Asp-11 and His-13. 4-CDP-2-C-methyl-D-erythritol 2-phosphate is bound by residues 11–13 (DVH) and 41–42 (HS). His-49 contributes to the a divalent metal cation binding site. Residues 63 to 65 (DIG), 68 to 72 (FPDTD), 139 to 142 (TTTE), Phe-146, and Arg-149 each bind 4-CDP-2-C-methyl-D-erythritol 2-phosphate.

Belongs to the IspF family. Homotrimer. The cofactor is a divalent metal cation.

It carries out the reaction 4-CDP-2-C-methyl-D-erythritol 2-phosphate = 2-C-methyl-D-erythritol 2,4-cyclic diphosphate + CMP. Its pathway is isoprenoid biosynthesis; isopentenyl diphosphate biosynthesis via DXP pathway; isopentenyl diphosphate from 1-deoxy-D-xylulose 5-phosphate: step 4/6. In terms of biological role, involved in the biosynthesis of isopentenyl diphosphate (IPP) and dimethylallyl diphosphate (DMAPP), two major building blocks of isoprenoid compounds. Catalyzes the conversion of 4-diphosphocytidyl-2-C-methyl-D-erythritol 2-phosphate (CDP-ME2P) to 2-C-methyl-D-erythritol 2,4-cyclodiphosphate (ME-CPP) with a corresponding release of cytidine 5-monophosphate (CMP). This chain is 2-C-methyl-D-erythritol 2,4-cyclodiphosphate synthase, found in Psychrobacter cryohalolentis (strain ATCC BAA-1226 / DSM 17306 / VKM B-2378 / K5).